The sequence spans 225 residues: Lipoarabinomannan carrier protein LprG (225 aa).

The signal sequence occupies residues 1-21; that stretch reads MRNRIRLALIPVAVAAIALAG. A lipid anchor (N-palmitoyl cysteine) is attached at cysteine 22. Cysteine 22 carries S-diacylglycerol cysteine lipidation.

The protein belongs to the LppX/LprAFG lipoprotein family. Post-translationally, modified by Lgt on Cys-22 with an S-linked diacylglyceral, signal peptide is removed by LspA, Cys-22 is further modifed with a fatty acid on its amino group by Lnt yielding a triacylated protein.

It is found in the cell inner membrane. Helps membrane protein MAB_2807 (P55) transport triacylglycerides (TAG) across the inner cell membrane into the periplasm and probably ultimately to the outer membrane. Binds TAG in its hydrophobic cavity and transfers it between lipid bilayers. TAG probably regulates lipid metabolism and growth regulation and plays a structural role in the outer membrane. Also binds mannosides, lipoarabinomannan and lipomannan and various glycolipids in the same cavity. The sequence is that of Lipoarabinomannan carrier protein LprG from Mycobacteroides abscessus (strain ATCC 19977 / DSM 44196 / CCUG 20993 / CIP 104536 / JCM 13569 / NCTC 13031 / TMC 1543 / L948) (Mycobacterium abscessus).